A 248-amino-acid polypeptide reads, in one-letter code: MPRKHLIASGINKKQQTQAKLGNKLAKEIKAAAKVGGPNPEANPRLKAAIDKALQNNLSKESIEKNINGSIKDPSSLTDAEYEGYGPNGLRIIIKTLSDNDNRTISSLRGYFSKLKGEIAKPNSVKNSFIYGGEIIISNKDLTEDDLMEKILLSLEKIEVTDNDEPIQETNQHEDCFQIIVMPKYFYKIRQELETLGLKIIESEIKYIPTDYVDLNKEDYARLERFLDSCNEDDDVQWVISNFGEVIE.

Belongs to the TACO1 family.

The protein resides in the cytoplasm. In Malacoplasma penetrans (strain HF-2) (Mycoplasma penetrans), this protein is Probable transcriptional regulatory protein MYPE8020.